We begin with the raw amino-acid sequence, 397 residues long: Xylose isomerase (397 aa).

Catalysis depends on residues H54 and D57. Mg(2+) is bound by residues E181, E217, H220, D245, D255, D257, and D293.

Belongs to the xylose isomerase family. As to quaternary structure, homotetramer. Requires Mg(2+) as cofactor.

The protein localises to the cytoplasm. It carries out the reaction alpha-D-xylose = alpha-D-xylulofuranose. This is Xylose isomerase from Clavibacter michiganensis subsp. michiganensis (strain NCPPB 382).